Consider the following 1233-residue polypeptide: ATP-dependent helicase/nuclease subunit A (1233 aa).

One can recognise a UvrD-like helicase ATP-binding domain in the interval 3 to 474; the sequence is TKWTEEQKQA…ILLYKNFRSR (472 aa). Position 24–31 (24–31) interacts with ATP; it reads AAAGSGKT. Positions 518–809 constitute a UvrD-like helicase C-terminal domain; that stretch reads VTGGAVELHL…RIMSIHKSKG (292 aa). The tract at residues 533–555 is disordered; the sequence is VEEEVEEKEEEKNEEKDFEEEEE.

This sequence belongs to the helicase family. AddA subfamily. Heterodimer of AddA and AddB/RexB. Mg(2+) serves as cofactor.

The enzyme catalyses Couples ATP hydrolysis with the unwinding of duplex DNA by translocating in the 3'-5' direction.. The catalysed reaction is ATP + H2O = ADP + phosphate + H(+). Functionally, the heterodimer acts as both an ATP-dependent DNA helicase and an ATP-dependent, dual-direction single-stranded exonuclease. Recognizes the chi site generating a DNA molecule suitable for the initiation of homologous recombination. The AddA nuclease domain is required for chi fragment generation; this subunit has the helicase and 3' -&gt; 5' nuclease activities. In Thermoanaerobacter sp. (strain X514), this protein is ATP-dependent helicase/nuclease subunit A.